The chain runs to 299 residues: Taste receptor type 2 member 4 (299 aa).

The Extracellular segment spans residues 1–9; that stretch reads MLRLFYFSA. A helical membrane pass occupies residues 10 to 30; sequence VIASVILNFVGIIMNLFITVV. Residues 31–46 lie on the Cytoplasmic side of the membrane; it reads NCKTWVKSHRISSSDR. Residues 47-67 form a helical membrane-spanning segment; it reads ILFSLGITRFLMLGLFLVNTI. The Extracellular segment spans residues 68–81; that stretch reads YFVSSNMERSVYLS. The chain crosses the membrane as a helical span at residues 82-102; that stretch reads AFFVLCFMFLDSSSLWFVTLL. Residues 103–131 are Cytoplasmic-facing; it reads NILYCVKITNFQHSVFLLLKRSISPKIPR. The helical transmembrane segment at 132 to 152 threads the bilayer; it reads LLLAFVLISAFTTCLYITLSQ. Topologically, residues 153–172 are extracellular; sequence ASPFPELVTTRNNTSFNISE. Residues Asn-164, Asn-165, and Asn-169 are each glycosylated (N-linked (GlcNAc...) asparagine). The helical transmembrane segment at 173-193 threads the bilayer; the sequence is GILSLVVSLVLSSSLQFIINV. Residues 194–230 lie on the Cytoplasmic side of the membrane; sequence TSASLLIHSLRRHIQKMQKNATGFWNPQMEAHVGAMK. The helical transmembrane segment at 231–251 threads the bilayer; it reads LMVYFLILYIPYSVATLVQYL. Over 252–262 the chain is Extracellular; that stretch reads PFYAGMDMGTK. The helical transmembrane segment at 263–283 threads the bilayer; the sequence is SICLIFATLYSPGHSVLIIIT. At 284-299 the chain is on the cytoplasmic side; sequence HPKLKTTAKKILCFKK.

Belongs to the G-protein coupled receptor T2R family.

The protein resides in the membrane. It localises to the cell projection. It is found in the cilium membrane. Gustducin-coupled receptor implicated in the perception of bitter compounds in the oral cavity and the gastrointestinal tract. Signals through PLCB2 and the calcium-regulated cation channel TRPM5. In airway epithelial cells, binding of denatonium increases the intracellular calcium ion concentration and stimulates ciliary beat frequency. The sequence is that of Taste receptor type 2 member 4 (TAS2R4) from Gorilla gorilla gorilla (Western lowland gorilla).